The primary structure comprises 102 residues: Large ribosomal subunit protein bL21 (102 aa).

Belongs to the bacterial ribosomal protein bL21 family. As to quaternary structure, part of the 50S ribosomal subunit. Contacts protein L20.

Its function is as follows. This protein binds to 23S rRNA in the presence of protein L20. The protein is Large ribosomal subunit protein bL21 of Marinomonas sp. (strain MWYL1).